The chain runs to 185 residues: Elongation factor P (185 aa).

Belongs to the elongation factor P family.

The protein resides in the cytoplasm. The protein operates within protein biosynthesis; polypeptide chain elongation. Functionally, involved in peptide bond synthesis. Stimulates efficient translation and peptide-bond synthesis on native or reconstituted 70S ribosomes in vitro. Probably functions indirectly by altering the affinity of the ribosome for aminoacyl-tRNA, thus increasing their reactivity as acceptors for peptidyl transferase. This Bacillus cereus (strain ATCC 10987 / NRS 248) protein is Elongation factor P.